The primary structure comprises 89 residues: Elongation factor 1-beta (89 aa).

The protein belongs to the EF-1-beta/EF-1-delta family.

Promotes the exchange of GDP for GTP in EF-1-alpha/GDP, thus allowing the regeneration of EF-1-alpha/GTP that could then be used to form the ternary complex EF-1-alpha/GTP/AAtRNA. This is Elongation factor 1-beta from Methanobrevibacter smithii (strain ATCC 35061 / DSM 861 / OCM 144 / PS).